The sequence spans 705 residues: Prolyl endopeptidase (705 aa).

A signal peptide spans 1–20 (MKYKKLSVAVAAFAFAAVSA). Active-site charge relay system residues include S556 and H675.

The protein belongs to the peptidase S9A family. In terms of assembly, monomer.

The protein resides in the periplasm. The catalysed reaction is Hydrolysis of Pro-|-Xaa &gt;&gt; Ala-|-Xaa in oligopeptides.. Cleaves peptide bonds on the C-terminal side of prolyl residues within peptides that are up to approximately 30 amino acids long. Has an absolute requirement for an X-Pro bond in the trans configuration immediately preceding the Pro-Y scissible bond. The polypeptide is Prolyl endopeptidase (Elizabethkingia miricola (Chryseobacterium miricola)).